The primary structure comprises 394 residues: Flap endonuclease 1 (394 aa).

An N-domain region spans residues 1–104; that stretch reads MGIKQLFSVI…GELAKRFQRK (104 aa). Asp-34 contacts Mg(2+). 2 residues coordinate DNA: Arg-47 and Arg-70. Positions 86, 158, 160, 179, and 181 each coordinate Mg(2+). The tract at residues 122-253 is I-domain; sequence DVEKFSRRTV…STALKLIREH (132 aa). Residue Glu-158 participates in DNA binding. Positions 231 and 233 each coordinate DNA. A Mg(2+)-binding site is contributed by Asp-233. Residues 341–349 are interaction with PCNA; it reads QQARIEGFF. The span at 356–383 shows a compositional bias: basic and acidic residues; the sequence is EEEKKAHKRKLEEQAEQKRKKVKEEKKE. The disordered stretch occupies residues 356–394; the sequence is EEEKKAHKRKLEEQAEQKRKKVKEEKKEKAKLKAKPRGA. The segment covering 384 to 394 has biased composition (basic residues); that stretch reads KAKLKAKPRGA.

It belongs to the XPG/RAD2 endonuclease family. FEN1 subfamily. In terms of assembly, interacts with PCNA. Three molecules of dnr-8/fen1 bind to one PCNA trimer with each molecule binding to one PCNA monomer. PCNA stimulates the nuclease activity without altering cleavage specificity. Mg(2+) is required as a cofactor. Phosphorylated. Phosphorylation upon DNA damage induces relocalization to the nuclear plasma.

The protein resides in the nucleus. The protein localises to the nucleolus. It is found in the nucleoplasm. Its subcellular location is the mitochondrion. Structure-specific nuclease with 5'-flap endonuclease and 5'-3' exonuclease activities involved in DNA replication and repair. During DNA replication, cleaves the 5'-overhanging flap structure that is generated by displacement synthesis when DNA polymerase encounters the 5'-end of a downstream Okazaki fragment. It enters the flap from the 5'-end and then tracks to cleave the flap base, leaving a nick for ligation. Also involved in the long patch base excision repair (LP-BER) pathway, by cleaving within the apurinic/apyrimidinic (AP) site-terminated flap. Acts as a genome stabilization factor that prevents flaps from equilibrating into structures that lead to duplications and deletions. Also possesses 5'-3' exonuclease activity on nicked or gapped double-stranded DNA, and exhibits RNase H activity. Also involved in replication and repair of rDNA and in repairing mitochondrial DNA. This chain is Flap endonuclease 1 (dnr-8), found in Neurospora crassa (strain ATCC 24698 / 74-OR23-1A / CBS 708.71 / DSM 1257 / FGSC 987).